Consider the following 461-residue polypeptide: uncharacterized protein (461 aa).

Transmembrane regions (helical) follow at residues 18-38 (IITW…FLIY) and 124-144 (FIFL…ILSI). 2 consecutive PLD phosphodiesterase domains span residues 197-224 (YNYR…ADEY) and 374-401 (TPGF…DYRS).

The protein belongs to the phospholipase D family. Cardiolipin synthase subfamily.

The protein resides in the cell membrane. This is an uncharacterized protein from Streptococcus mutans serotype c (strain ATCC 700610 / UA159).